The primary structure comprises 65 residues: LTCVTSKSIFGITTEDCPDGQNLCFKRRHYVVPKIYDITRGCVATCPIPENYDSIHCCKTEKCNN.

Disulfide bonds link Cys-3/Cys-24, Cys-17/Cys-42, Cys-46/Cys-57, and Cys-58/Cys-63.

It belongs to the three-finger toxin family. Short-chain subfamily. Aminergic toxin sub-subfamily. In terms of tissue distribution, expressed by the venom gland.

It is found in the secreted. Highly potent on various alpha-adrenoceptors (ADRA) (subnanomolar affinity for ADRA1A). Order of potency is the following: ADRA1A (Ki=0.37 nM) &gt; ADRA1B (Ki=10.47 nM) &gt; ADRA1D (Ki=104.71 nM) &gt; ADRA2C (Ki=165.96 nM). Were also found to reversibly bind to muscarinic acetylcholine receptors (CHRM), but the affinity is much weaker (CHRM1, Ki=1778.28 nM; CHRM4, Ki=4466.84 nM; CHRM2, Ki=17782.79 nM). This chain is Adrenergic toxin rho-elapitoxin-Dp1b, found in Dendroaspis polylepis polylepis (Black mamba).